Consider the following 322-residue polypeptide: Putative membrane-bound redox modulator Alx (322 aa).

The Periplasmic segment spans residues 1–6; it reads MNTVGT. A helical transmembrane segment spans residues 7–27; the sequence is PLLWGGFAVVVVIMLSIDLLL. Over 28-43 the chain is Cytoplasmic; it reads QGRRGAHAMSMKQAAG. Residues 44–64 form a helical membrane-spanning segment; sequence WSILWVTLSLLFNAAFWWYLA. Residues 65 to 89 are Periplasmic-facing; it reads ETQGREVADPQALAFLTGYLIEKSL. A helical membrane pass occupies residues 90–110; sequence AVDNVFVWLMLFSYFSVPPAL. The Cytoplasmic segment spans residues 111–113; it reads QRR. A helical membrane pass occupies residues 114–134; that stretch reads VLVYGVLGAIVLRTIMIFAGT. A topological domain (periplasmic) is located at residue Trp-135. A helical membrane pass occupies residues 136–156; that stretch reads LITQFEWLLYVFGAFLLFTGV. At 157-198 the chain is on the cytoplasmic side; sequence KMALAKEDESGIGEKPMVRWLRGHLRMTDTIENEHFFVRKNG. Residues 199–219 form a helical membrane-spanning segment; that stretch reads LLYATPLLLVLIMVEFSDVIF. The Periplasmic portion of the chain corresponds to 220-225; it reads AVDSIP. Residues 226 to 246 traverse the membrane as a helical segment; the sequence is AIFAVTTDPFIVLTSNLFAIL. The Cytoplasmic segment spans residues 247–261; that stretch reads GLRAMYFLLSGVAER. The helical transmembrane segment at 262–282 threads the bilayer; the sequence is FSMLKYGLAVILVFIGIKMLI. The Periplasmic segment spans residues 283–286; sequence VDFY. A helical membrane pass occupies residues 287 to 307; sequence HIPIAISLGVVFGILTITLVI. Residues 308-321 lie on the Cytoplasmic side of the membrane; the sequence is NTWVNHQRDKKLRA.

It belongs to the TerC family.

The protein localises to the cell inner membrane. Functionally, has been proposed to be a redox modulator. This is Putative membrane-bound redox modulator Alx (alx) from Salmonella typhi.